The sequence spans 455 residues: tRNA modification GTPase MnmE (455 aa).

3 residues coordinate (6S)-5-formyl-5,6,7,8-tetrahydrofolate: R25, E85, and R124. Residues 221-375 (GLSTAIIGRP…IEERINKLFF (155 aa)) enclose the TrmE-type G domain. N231 is a binding site for K(+). GTP contacts are provided by residues 231 to 236 (NVGKSS), 250 to 256 (TDIEGTT), and 275 to 278 (DTAG). Residue S235 coordinates Mg(2+). T250, I252, and T255 together coordinate K(+). Residue T256 participates in Mg(2+) binding. Residue K455 participates in (6S)-5-formyl-5,6,7,8-tetrahydrofolate binding.

It belongs to the TRAFAC class TrmE-Era-EngA-EngB-Septin-like GTPase superfamily. TrmE GTPase family. As to quaternary structure, homodimer. Heterotetramer of two MnmE and two MnmG subunits. K(+) serves as cofactor.

The protein resides in the cytoplasm. Exhibits a very high intrinsic GTPase hydrolysis rate. Involved in the addition of a carboxymethylaminomethyl (cmnm) group at the wobble position (U34) of certain tRNAs, forming tRNA-cmnm(5)s(2)U34. The protein is tRNA modification GTPase MnmE of Streptococcus mutans serotype c (strain ATCC 700610 / UA159).